We begin with the raw amino-acid sequence, 181 residues long: MGLRFTKALSRLFGKKEMRILMVGLDAAGKTTILYKLKLGEIVTTIPTIGFNVETVEYKNISFTVWDVGGQDKIRPLWRHYFQNTQGLIFVVDSNDRERVVEARDELHRMLNEDELRDAVLLVFANKQDLPNAMNAAEITDKLGLHSLRQRHWYIQSTCATSGEGLYEGLDWLSNNLANKT.

The N-myristoyl glycine moiety is linked to residue glycine 2. GTP is bound by residues 24-31 (GLDAAGKT), 67-71 (DVGGQ), and 126-129 (NKQD).

This sequence belongs to the small GTPase superfamily. Arf family.

The protein localises to the golgi apparatus. It carries out the reaction GTP + H2O = GDP + phosphate + H(+). GTP-binding protein involved in protein trafficking; may modulate vesicle budding and uncoating within the Golgi apparatus. In Chlamydomonas reinhardtii (Chlamydomonas smithii), this protein is ADP-ribosylation factor 1 (ARF1).